We begin with the raw amino-acid sequence, 478 residues long: Methionine aminopeptidase 2 (478 aa).

The disordered stretch occupies residues 1-122 (MAGVEEVAAS…TDPPSVPICD (122 aa)). An N-acetylalanine modification is found at A2. A compositionally biased stretch (basic residues) spans 36-46 (KKKRRKKKKSK). S45 is modified (phosphoserine). Basic and acidic residues predominate over residues 55–79 (EPDKESGASVDEVARQLERSALEDK). Phosphoserine; alternate occurs at positions 60 and 63. 2 O-linked (GlcNAc) serine; alternate glycosylation sites follow: S60 and S63. Residue S74 is modified to Phosphoserine. Acidic residues predominate over residues 80 to 92 (ERDEDDEDGDGDG). Residues 97–109 (GKKKKKKKKKRGP) are compositionally biased toward basic residues. H231 contributes to the substrate binding site. Residues D251, D262, and H331 each contribute to the a divalent metal cation site. H339 serves as a coordination point for substrate. 2 residues coordinate a divalent metal cation: E364 and E459.

It belongs to the peptidase M24A family. Methionine aminopeptidase eukaryotic type 2 subfamily. As to quaternary structure, interacts strongly with the eIF-2 gamma-subunit EIF2S3. Binds EIF2S1 at low magnesium concentrations. It depends on Co(2+) as a cofactor. The cofactor is Zn(2+). Mn(2+) is required as a cofactor. Requires Fe(2+) as cofactor. Post-translationally, contains approximately 12 O-linked N-acetylglucosamine (GlcNAc) residues. O-glycosylation is required for EIF2S1 binding.

It localises to the cytoplasm. The catalysed reaction is Release of N-terminal amino acids, preferentially methionine, from peptides and arylamides.. Functionally, cotranslationally removes the N-terminal methionine from nascent proteins. The N-terminal methionine is often cleaved when the second residue in the primary sequence is small and uncharged (Met-Ala-, Cys, Gly, Pro, Ser, Thr, or Val). The catalytic activity of human METAP2 toward Met-Val peptides is consistently two orders of magnitude higher than that of METAP1, suggesting that it is responsible for processing proteins containing N-terminal Met-Val and Met-Thr sequences in vivo. In terms of biological role, protects eukaryotic initiation factor EIF2S1 from translation-inhibiting phosphorylation by inhibitory kinases such as EIF2AK2/PKR and EIF2AK1/HCR. Plays a critical role in the regulation of protein synthesis. In Homo sapiens (Human), this protein is Methionine aminopeptidase 2.